Here is a 493-residue protein sequence, read N- to C-terminus: Proline--tRNA ligase (493 aa).

This sequence belongs to the class-II aminoacyl-tRNA synthetase family. ProS type 3 subfamily. Homodimer.

Its subcellular location is the cytoplasm. The catalysed reaction is tRNA(Pro) + L-proline + ATP = L-prolyl-tRNA(Pro) + AMP + diphosphate. Functionally, catalyzes the attachment of proline to tRNA(Pro) in a two-step reaction: proline is first activated by ATP to form Pro-AMP and then transferred to the acceptor end of tRNA(Pro). This chain is Proline--tRNA ligase, found in Parabacteroides distasonis (strain ATCC 8503 / DSM 20701 / CIP 104284 / JCM 5825 / NCTC 11152).